A 123-amino-acid polypeptide reads, in one-letter code: Small ribosomal subunit protein uS12 (123 aa).

At D89 the chain carries 3-methylthioaspartic acid.

The protein belongs to the universal ribosomal protein uS12 family. Part of the 30S ribosomal subunit. Contacts proteins S8 and S17. May interact with IF1 in the 30S initiation complex.

Functionally, with S4 and S5 plays an important role in translational accuracy. Its function is as follows. Interacts with and stabilizes bases of the 16S rRNA that are involved in tRNA selection in the A site and with the mRNA backbone. Located at the interface of the 30S and 50S subunits, it traverses the body of the 30S subunit contacting proteins on the other side and probably holding the rRNA structure together. The combined cluster of proteins S8, S12 and S17 appears to hold together the shoulder and platform of the 30S subunit. The chain is Small ribosomal subunit protein uS12 from Rhodospirillum centenum (strain ATCC 51521 / SW).